Consider the following 388-residue polypeptide: Succinate--CoA ligase [ADP-forming] subunit beta (388 aa).

Positions 9-244 (KQLFARYGMP…KSQEDEREAQ (236 aa)) constitute an ATP-grasp domain. ATP-binding positions include Lys46, 53 to 55 (GRG), Glu99, Thr102, and Glu107. 2 residues coordinate Mg(2+): Asn199 and Asp213. Substrate contacts are provided by residues Asn264 and 321–323 (GIV).

It belongs to the succinate/malate CoA ligase beta subunit family. As to quaternary structure, heterotetramer of two alpha and two beta subunits. The cofactor is Mg(2+).

The catalysed reaction is succinate + ATP + CoA = succinyl-CoA + ADP + phosphate. It catalyses the reaction GTP + succinate + CoA = succinyl-CoA + GDP + phosphate. It functions in the pathway carbohydrate metabolism; tricarboxylic acid cycle; succinate from succinyl-CoA (ligase route): step 1/1. Succinyl-CoA synthetase functions in the citric acid cycle (TCA), coupling the hydrolysis of succinyl-CoA to the synthesis of either ATP or GTP and thus represents the only step of substrate-level phosphorylation in the TCA. The beta subunit provides nucleotide specificity of the enzyme and binds the substrate succinate, while the binding sites for coenzyme A and phosphate are found in the alpha subunit. The chain is Succinate--CoA ligase [ADP-forming] subunit beta from Yersinia enterocolitica serotype O:8 / biotype 1B (strain NCTC 13174 / 8081).